The primary structure comprises 778 residues: Centromere/kinetochore protein zw10 homolog (778 aa).

Positions 47–99 (FDRLENLEDIAEMSTRNLSNLIDQTAKDSPEMLAEIKSQAQSCENLVEFLQSM) form a coiled coil.

This sequence belongs to the ZW10 family. Component of the RZZ complex composed of rod-1, czw-1 and zwl-1.

Its subcellular location is the chromosome. It is found in the centromere. It localises to the kinetochore. The protein localises to the cytoplasm. The protein resides in the cytoskeleton. Its subcellular location is the spindle. Functionally, essential component of the mitotic checkpoint, which prevents cells from prematurely exiting mitosis. Required for the assembly of the dynein-dynactin and mdf-1-mdf-2 complexes onto kinetochores. Its function related to the spindle assembly machinery and kinetochore-microtubule attachments likely depends on its association in the mitotic RZZ complex. The RZZ complex recruits the spindly-like protein spdl-1 to kinetochores. To prevent irregular chromosome segregation, the complex also inhibits the attachment of the kinetochore-associated NDC80 complex to microtubules. The recruitment of spdl-1 to kinetochores relieves this inhibition. Required for embryonic development. The sequence is that of Centromere/kinetochore protein zw10 homolog from Caenorhabditis elegans.